A 637-amino-acid chain; its full sequence is Dihydrolipoyllysine-residue acetyltransferase component of pyruvate dehydrogenase complex, mitochondrial (637 aa).

The N-terminal 85 residues, methionine 1–tyrosine 85, are a transit peptide targeting the mitochondrion. Positions proline 80–proline 100 are disordered. The Lipoyl-binding 1 domain maps to histidine 90–valine 166. At serine 99 the chain carries Phosphoserine. Lysine 131 carries the N6-lipoyllysine modification. Disordered stretches follow at residues glutamine 189–methionine 219 and leucine 307–proline 340. The segment covering alanine 201 to proline 211 has biased composition (low complexity). The 70-residue stretch at histidine 218–valine 287 folds into the Lipoyl-binding 2 domain. The span at glutamine 310–alanine 321 shows a compositional bias: pro residues. Positions alanine 322–proline 333 are enriched in low complexity. The Peripheral subunit-binding (PSBD) domain occupies phenylalanine 345–valine 382. Arginine 451 is a CoA binding site. Lysine 456 bears the N6-acetyllysine mark. An N6-succinyllysine modification is found at lysine 463. Serine 465 lines the CoA pocket. Lysine 537 carries the post-translational modification N6-succinyllysine. 3 residues coordinate CoA: serine 556, asparagine 557, and glycine 581. Residues histidine 610 and aspartate 614 contribute to the active site.

This sequence belongs to the 2-oxoacid dehydrogenase family. In terms of assembly, part of the pyruvate dehydrogenase complex (PDHc) that is a multi-enzyme complex composed of multiple copies of three enzymes, pyruvate dehydrogenase (subunits PDH1A and PDHB, E1 component), dihydrolipoamide acetyltransferase (DLAT, E2 component), and dihydrolipoamide dehydrogenase (DLD, E3 component) to which is added an additional protein the E3-binding protein (PDHX, E3BP). In terms of structural architecture, the E2 and E3BP components assemble into a 60meric central core with icosahedral symmetry. The central core is decorated with E1 and E3 proteins. Currently, two alternative models for the E2:E3BP stoichiometry are considered as being either 48:12 (E2(48)-E3BP(12)) or 40:20 (E2(40)-E3BP(20)). Interacts with PDK2 and PDK3. Interacts with SIRT4. Interacts with PDHB. (R)-lipoate serves as cofactor. Post-translationally, delipoylated at Lys-131 by SIRT4, delipoylation decreases the PHD complex activity. As to expression, detected at higher levels in cauda epididymal spermatazoa than in caput epididymal spermatazoa (at protein level).

The protein resides in the mitochondrion matrix. The enzyme catalyses N(6)-[(R)-dihydrolipoyl]-L-lysyl-[protein] + acetyl-CoA = N(6)-[(R)-S(8)-acetyldihydrolipoyl]-L-lysyl-[protein] + CoA. In terms of biological role, as part of the pyruvate dehydrogenase complex, catalyzes the transfers of an acetyl group to a lipoic acid moiety. The pyruvate dehydrogenase complex, catalyzes the overall conversion of pyruvate to acetyl-CoA and CO(2), and thereby links cytoplasmic glycolysis and the mitochondrial tricarboxylic acid (TCA) cycle. The chain is Dihydrolipoyllysine-residue acetyltransferase component of pyruvate dehydrogenase complex, mitochondrial from Mesocricetus auratus (Golden hamster).